The chain runs to 88 residues: Sapecin-B (88 aa).

Residues 1-24 (MKFLTSLLLLFVVVMVSAVNLSMA) form the signal peptide. The propeptide occupies 25-54 (KESANQLTERLQELDGAAIQEPAELNRHKR). Intrachain disulfides connect cysteine 57-cysteine 78, cysteine 64-cysteine 84, and cysteine 68-cysteine 86.

Belongs to the invertebrate defensin family. Type 1 subfamily. As to expression, hemocytes and fat body.

It localises to the secreted. Functionally, sapecins, which are potent bactericidal proteins, are produced in response to injury. Sapecin B is cytotoxic to Gram-positive bacteria. The sequence is that of Sapecin-B from Sarcophaga peregrina (Flesh fly).